The chain runs to 954 residues: Glycine dehydrogenase (decarboxylating) (954 aa).

Position 706 is an N6-(pyridoxal phosphate)lysine (Lys-706).

It belongs to the GcvP family. In terms of assembly, the glycine cleavage system is composed of four proteins: P, T, L and H. Pyridoxal 5'-phosphate serves as cofactor.

It carries out the reaction N(6)-[(R)-lipoyl]-L-lysyl-[glycine-cleavage complex H protein] + glycine + H(+) = N(6)-[(R)-S(8)-aminomethyldihydrolipoyl]-L-lysyl-[glycine-cleavage complex H protein] + CO2. Functionally, the glycine cleavage system catalyzes the degradation of glycine. The P protein binds the alpha-amino group of glycine through its pyridoxal phosphate cofactor; CO(2) is released and the remaining methylamine moiety is then transferred to the lipoamide cofactor of the H protein. This Pseudomonas savastanoi pv. phaseolicola (strain 1448A / Race 6) (Pseudomonas syringae pv. phaseolicola (strain 1448A / Race 6)) protein is Glycine dehydrogenase (decarboxylating).